Here is a 502-residue protein sequence, read N- to C-terminus: ATP synthase subunit alpha (502 aa).

169-176 (GDRQTGKT) provides a ligand contact to ATP.

Belongs to the ATPase alpha/beta chains family. In terms of assembly, F-type ATPases have 2 components, CF(1) - the catalytic core - and CF(0) - the membrane proton channel. CF(1) has five subunits: alpha(3), beta(3), gamma(1), delta(1), epsilon(1). CF(0) has three main subunits: a(1), b(2) and c(9-12). The alpha and beta chains form an alternating ring which encloses part of the gamma chain. CF(1) is attached to CF(0) by a central stalk formed by the gamma and epsilon chains, while a peripheral stalk is formed by the delta and b chains.

The protein resides in the cell inner membrane. The catalysed reaction is ATP + H2O + 4 H(+)(in) = ADP + phosphate + 5 H(+)(out). Its function is as follows. Produces ATP from ADP in the presence of a proton gradient across the membrane. The alpha chain is a regulatory subunit. In Geobacter sp. (strain M21), this protein is ATP synthase subunit alpha.